The sequence spans 116 residues: MQPGGQPNMQQIMEQAQKMQQQLMTAQQELAEAEVSGSAGGGLVTAVVSGSGELKSVAIDPKAVDPDDTDTLSDLVVAAVRDANRAAQELQQEKMGPVTGALGGGQGLGGLGLPGL.

The segment at Leu-90–Leu-116 is disordered. Gly residues predominate over residues Ala-101 to Leu-116.

Belongs to the YbaB/EbfC family. As to quaternary structure, homodimer.

It localises to the cytoplasm. It is found in the nucleoid. Functionally, binds to DNA and alters its conformation. May be involved in regulation of gene expression, nucleoid organization and DNA protection. The protein is Nucleoid-associated protein SACE_0254 of Saccharopolyspora erythraea (strain ATCC 11635 / DSM 40517 / JCM 4748 / NBRC 13426 / NCIMB 8594 / NRRL 2338).